We begin with the raw amino-acid sequence, 354 residues long: Guanine nucleotide-binding protein G(i) subunit alpha-3 (354 aa).

Residue glycine 2 is the site of N-myristoyl glycine attachment. Cysteine 3 is lipidated: S-palmitoyl cysteine. Residues lysine 32 to tyrosine 354 enclose the G-alpha domain. Residues lysine 35 to threonine 48 are G1 motif. Residues glycine 42, glutamate 43, serine 44, glycine 45, lysine 46, serine 47, threonine 48, aspartate 150, serine 151, leucine 175, arginine 176, threonine 177, arginine 178, valine 179, lysine 180, threonine 181, valine 201, and glycine 203 each coordinate GTP. Residues glutamate 43, serine 44, glycine 45, lysine 46, serine 47, and threonine 48 each coordinate GDP. Serine 47 is a binding site for Mg(2+). 5 residues coordinate GDP: serine 151, leucine 175, arginine 176, threonine 177, and arginine 178. A G2 motif region spans residues aspartate 173–threonine 181. An ADP-ribosylarginine; by cholera toxin modification is found at arginine 178. Residue threonine 181 coordinates Mg(2+). A G3 motif region spans residues phenylalanine 196 to arginine 205. Glutamine 204 is subject to Deamidated glutamine; by Photorhabdus PAU_02230. The G4 motif stretch occupies residues isoleucine 265–aspartate 272. GTP is bound by residues asparagine 269, lysine 270, aspartate 272, leucine 273, cysteine 325, alanine 326, and threonine 327. GDP contacts are provided by asparagine 269, lysine 270, and aspartate 272. A G5 motif region spans residues threonine 324 to threonine 329. GDP-binding residues include cysteine 325 and alanine 326. Cysteine 351 carries the ADP-ribosylcysteine; by pertussis toxin modification.

This sequence belongs to the G-alpha family. G(i/o/t/z) subfamily. In terms of assembly, heterotrimeric G proteins are composed of 3 units; alpha, beta and gamma. The alpha subunit contains the guanine nucleotide binding site. GTP binding causes dissociation of the heterotrimer, liberating the individual subunits so that they can interact with downstream effector proteins. Forms a complex with CCDC88A/GIV and EGFR which leads to enhanced EGFR signaling and triggering of cell migration; ligand stimulation is required for recruitment of GNAI3 to the complex. Interacts (inactive GDP-bound form) with CCDC88A/GIV (via GBA motif); the interaction leads to activation of GNAI3. Interacts (inactive GDP-bound form) with CCDC88C/DAPLE (via GBA motif); the interaction leads to activation of GNAI3. Interacts (inactive GDP-bound form) with NUCB1 (via GBA motif) and NUCB2 (via GBA motif); the interaction leads to activation of GNAI3. Interacts (inactive GDP-bound form) with PLCD4 (via GBA motif); the interaction leads to activation of GNAI3. Interacts with INSR; the interaction is probably mediated by CCDC88A/GIV. Interacts with GPSM1. Interacts (GDP-bound form) with GPSM2 (via GoLoco domains). Does not interact with RGS2. Interacts with RGS8 and RGS10; this strongly enhances the intrinsic GTPase activity. Interacts with RGS16; this strongly enhances the intrinsic GTPase activity. Interacts with RGS12. Interacts (via active GTP- or inactive GDP-bound form) with RGS14. Interacts (via active GTP-bound form) with TRPC5 (via ANK repeats) in a homotetrameric ion channel; the interaction is direct and activates the channel activity. Post-translationally, (Microbial infection) Deamidated at Gln-204 by Photorhabdus asymbiotica toxin PAU_02230, blocking GTP hydrolysis of heterotrimeric GNAQ or GNA11 and G-alphai (GNAI1, GNAI2 or GNAI3) proteins, thereby activating RhoA.

It is found in the cytoplasm. It localises to the cell membrane. Its subcellular location is the cytoskeleton. The protein localises to the microtubule organizing center. The protein resides in the centrosome. Heterotrimeric guanine nucleotide-binding proteins (G proteins) function as transducers downstream of G protein-coupled receptors (GPCRs) in numerous signaling cascades. The alpha chain contains the guanine nucleotide binding site and alternates between an active, GTP-bound state and an inactive, GDP-bound state. Signaling by an activated GPCR promotes GDP release and GTP binding. The alpha subunit has a low GTPase activity that converts bound GTP to GDP, thereby terminating the signal. Both GDP release and GTP hydrolysis are modulated by numerous regulatory proteins. Signaling is mediated via effector proteins, such as adenylate cyclase. Inhibits adenylate cyclase activity, leading to decreased intracellular cAMP levels. Stimulates the activity of receptor-regulated K(+) channels. The active GTP-bound form prevents the association of RGS14 with centrosomes and is required for the translocation of RGS14 from the cytoplasm to the plasma membrane. May play a role in cell division. The active GTP-bound form activates the calcium permeant TRPC5 ion channels. This is Guanine nucleotide-binding protein G(i) subunit alpha-3 (GNAI3) from Homo sapiens (Human).